A 169-amino-acid polypeptide reads, in one-letter code: Large ribosomal subunit protein uL10 (169 aa).

This sequence belongs to the universal ribosomal protein uL10 family. In terms of assembly, part of the ribosomal stalk of the 50S ribosomal subunit. The N-terminus interacts with L11 and the large rRNA to form the base of the stalk. The C-terminus forms an elongated spine to which L12 dimers bind in a sequential fashion forming a multimeric L10(L12)X complex.

Forms part of the ribosomal stalk, playing a central role in the interaction of the ribosome with GTP-bound translation factors. This is Large ribosomal subunit protein uL10 from Rickettsia massiliae (strain Mtu5).